Reading from the N-terminus, the 484-residue chain is Glutamyl-tRNA(Gln) amidotransferase subunit A (484 aa).

Residues Lys-76 and Ser-151 each act as charge relay system in the active site. Catalysis depends on Ser-175, which acts as the Acyl-ester intermediate.

Belongs to the amidase family. GatA subfamily. As to quaternary structure, heterotrimer of A, B and C subunits.

It carries out the reaction L-glutamyl-tRNA(Gln) + L-glutamine + ATP + H2O = L-glutaminyl-tRNA(Gln) + L-glutamate + ADP + phosphate + H(+). Its function is as follows. Allows the formation of correctly charged Gln-tRNA(Gln) through the transamidation of misacylated Glu-tRNA(Gln) in organisms which lack glutaminyl-tRNA synthetase. The reaction takes place in the presence of glutamine and ATP through an activated gamma-phospho-Glu-tRNA(Gln). This chain is Glutamyl-tRNA(Gln) amidotransferase subunit A, found in Saccharophagus degradans (strain 2-40 / ATCC 43961 / DSM 17024).